Consider the following 737-residue polypeptide: tRNA-dihydrouridine(47) synthase [NAD(P)(+)] (737 aa).

2 stretches are compositionally biased toward basic and acidic residues: residues 1-11 (MESQETAKRPI) and 24-33 (PATKRVKLDD). The segment at 1-127 (MESQETAKRP…GKKKRPKGQN (127 aa)) is disordered. Positions 35-44 (PVPQIQEEPS) are enriched in low complexity. Over residues 57-82 (EDEKPTEQRQDDRDKRRGIAPIKKEY) the composition is skewed to basic and acidic residues. 2 C3H1-type zinc fingers span residues 142–166 (CNSVAWTPEFSPRHCKHGERCNALH) and 187–208 (CPVWETHGKCSSGWRCLFVESH). FMN is bound by residues 332-334 (PLT) and glutamine 407. Residue cysteine 439 is the Proton donor of the active site. Residues lysine 479, histidine 520, 577–579 (NGD), and 601–602 (GR) each bind FMN.

It belongs to the Dus family. Dus3 subfamily. The cofactor is FMN.

The protein localises to the cytoplasm. Its subcellular location is the nucleus. It catalyses the reaction 5,6-dihydrouridine(47) in tRNA + NAD(+) = uridine(47) in tRNA + NADH + H(+). It carries out the reaction 5,6-dihydrouridine(47) in tRNA + NADP(+) = uridine(47) in tRNA + NADPH + H(+). The catalysed reaction is a 5,6-dihydrouridine in mRNA + NAD(+) = a uridine in mRNA + NADH + H(+). The enzyme catalyses a 5,6-dihydrouridine in mRNA + NADP(+) = a uridine in mRNA + NADPH + H(+). Catalyzes the synthesis of dihydrouridine, a modified base found in the D-loop of most tRNAs. Specifically modifies U47 in cytoplasmic tRNAs. Catalyzes the synthesis of dihydrouridine in some mRNAs, thereby affecting their translation. The sequence is that of tRNA-dihydrouridine(47) synthase [NAD(P)(+)] (dus-3) from Neurospora crassa (strain ATCC 24698 / 74-OR23-1A / CBS 708.71 / DSM 1257 / FGSC 987).